The chain runs to 761 residues: Translation initiation factor IF-2 (761 aa).

The disordered stretch occupies residues 39–179; that stretch reads DEETLNKAKQ…KVNHQQMPLP (141 aa). Low complexity predominate over residues 45 to 105; sequence KAKQAGKPAA…NNQQSQSQGQ (61 aa). Residues 106 to 120 are compositionally biased toward polar residues; sequence TKRPSQASNNQSGAA. A compositionally biased stretch (low complexity) spans 142 to 154; sequence PGSNNRRPGNNQN. The span at 155–168 shows a compositional bias: basic residues; that stretch reads RRNHGNRGGKRRPQ. Positions 262-435 constitute a tr-type G domain; sequence ERPPVVTIMG…EVEEFKANPD (174 aa). The segment at 271 to 278 is G1; sequence GHVDHGKT. 271-278 provides a ligand contact to GTP; it reads GHVDHGKT. The segment at 296–300 is G2; it reads GITQH. The tract at residues 317-320 is G3; that stretch reads DTPG. GTP contacts are provided by residues 317-321 and 371-374; these read DTPGH and NKID. Positions 371 to 374 are G4; that stretch reads NKID. A G5 region spans residues 407–409; the sequence is SAL.

It belongs to the TRAFAC class translation factor GTPase superfamily. Classic translation factor GTPase family. IF-2 subfamily.

It is found in the cytoplasm. One of the essential components for the initiation of protein synthesis. Protects formylmethionyl-tRNA from spontaneous hydrolysis and promotes its binding to the 30S ribosomal subunits. Also involved in the hydrolysis of GTP during the formation of the 70S ribosomal complex. This Shouchella clausii (strain KSM-K16) (Alkalihalobacillus clausii) protein is Translation initiation factor IF-2.